The chain runs to 544 residues: CTP synthase (544 aa).

The amidoligase domain stretch occupies residues 1–265; sequence MTKFIFVTGG…DNIITEQLQL (265 aa). Position 13 (Ser13) interacts with CTP. Ser13 lines the UTP pocket. ATP contacts are provided by residues 14-19 and Asp71; that span reads SLGKGI. Mg(2+) is bound by residues Asp71 and Glu139. CTP contacts are provided by residues 146–148, 186–191, and Lys222; these read DIE and KTKPTQ. Residues 186 to 191 and Lys222 contribute to the UTP site; that span reads KTKPTQ. Positions 290 to 544 constitute a Glutamine amidotransferase type-1 domain; it reads KIAMVGKYVD…VKAALNNKKA (255 aa). L-glutamine is bound at residue Gly353. Cys380 functions as the Nucleophile; for glutamine hydrolysis in the catalytic mechanism. L-glutamine contacts are provided by residues 381–384, Glu404, and Arg471; that span reads LGMQ. Active-site residues include His517 and Glu519.

Belongs to the CTP synthase family. In terms of assembly, homotetramer.

The enzyme catalyses UTP + L-glutamine + ATP + H2O = CTP + L-glutamate + ADP + phosphate + 2 H(+). The catalysed reaction is L-glutamine + H2O = L-glutamate + NH4(+). It catalyses the reaction UTP + NH4(+) + ATP = CTP + ADP + phosphate + 2 H(+). The protein operates within pyrimidine metabolism; CTP biosynthesis via de novo pathway; CTP from UDP: step 2/2. With respect to regulation, allosterically activated by GTP, when glutamine is the substrate; GTP has no effect on the reaction when ammonia is the substrate. The allosteric effector GTP functions by stabilizing the protein conformation that binds the tetrahedral intermediate(s) formed during glutamine hydrolysis. Inhibited by the product CTP, via allosteric rather than competitive inhibition. Functionally, catalyzes the ATP-dependent amination of UTP to CTP with either L-glutamine or ammonia as the source of nitrogen. Regulates intracellular CTP levels through interactions with the four ribonucleotide triphosphates. The sequence is that of CTP synthase from Neisseria meningitidis serogroup C / serotype 2a (strain ATCC 700532 / DSM 15464 / FAM18).